Reading from the N-terminus, the 429-residue chain is MQIYSKSEKAFKEAKKVLPGGVNSPVRAFNSVDASPVFMDHGKGAYITDIDGNEYIDYVLSWGPLILGHANPSVVQAITNAAMKGTSFGTPTEIETELAKLVIERVPSIEIVRMVSSGTEATMSAIRLARGYTKREKILKFEGSYHGHGDSLLIKAGSGVATLGLPDSPGVTKGLAADTITVPYNDIEGAKLAFEKYGEEIAAVIVEPVAGNMGVVPPIEGFLEGLRELTTNYGSLLIFDEVMTGFRVDYYSAQGYYVVTPDLTCLGKVIGGGLPVGAYGGKKEIMEQIAPAGSIYQAGTLSGNPLAMNAGFETVRQLTPQDYDVFRTLIKRMEEGLTEISARRQVPLSINKAGSMFGFFFTDQKVTNFDTAKTSDLEFFRSYYREMLGQGIFLPPSQFEGVFISTMHTEKEIDKTLDAFDTTCKILRG.

K268 carries the post-translational modification N6-(pyridoxal phosphate)lysine.

Belongs to the class-III pyridoxal-phosphate-dependent aminotransferase family. HemL subfamily. In terms of assembly, homodimer. The cofactor is pyridoxal 5'-phosphate.

The protein resides in the cytoplasm. It catalyses the reaction (S)-4-amino-5-oxopentanoate = 5-aminolevulinate. It participates in porphyrin-containing compound metabolism; protoporphyrin-IX biosynthesis; 5-aminolevulinate from L-glutamyl-tRNA(Glu): step 2/2. This chain is Glutamate-1-semialdehyde 2,1-aminomutase 2, found in Listeria monocytogenes serotype 4a (strain HCC23).